Consider the following 419-residue polypeptide: G protein-activated inward rectifier potassium channel 4 (419 aa).

Residues 1 to 24 (MAGDSRNAMNQDMEIGVTPRDPKK) are disordered. The Cytoplasmic portion of the chain corresponds to 1–86 (MAGDSRNAMN…LFTTLVDLKW (86 aa)). The residue at position 5 (Ser-5) is a Phosphoserine. The chain crosses the membrane as a helical span at residues 87–111 (RFNLLVFTMVYTITWLFFGFIWWLI). The Extracellular segment spans residues 112–135 (AYIRGDLDHVGDREWIPCVENLSG). The helical; Pore-forming intramembrane region spans 136 to 147 (FVSAFLFSIETE). The segment at residues 148-154 (TTIGYGF) is an intramembrane region (pore-forming). The Selectivity filter signature appears at 149 to 154 (TIGYGF). The Extracellular portion of the chain corresponds to 155–163 (RVITEKCPE). Residues 164-185 (GIVLLLVQAILGSIVNAFMVGC) form a helical membrane-spanning segment. At 186–419 (MFVKISQPKK…SGSQETKDSA (234 aa)) the chain is on the cytoplasmic side. Positions 381 to 419 (PSPPLPGGCVGAELGAEAEQEGEEEPEGLSGSQETKDSA) are disordered. Positions 396–407 (AEAEQEGEEEPE) are enriched in acidic residues.

Belongs to the inward rectifier-type potassium channel (TC 1.A.2.1) family. KCNJ5 subfamily. Associates with KCNJ3/GIRK1 or KCNJ6/GIRK2 to form a G-protein-activated heteromultimer pore-forming unit. The resulting inward current is much larger.

It is found in the membrane. It catalyses the reaction K(+)(in) = K(+)(out). With respect to regulation, heteromultimer composed of KCNJ3/GIRK1 and KCNJ5/GIRK4 is activated by phosphatidylinositol 4,5 biphosphate (PtdIns(4,5)P2). Inward rectifier potassium channels are characterized by a greater tendency to allow potassium to flow into the cell rather than out of it. Their voltage dependence is regulated by the concentration of extracellular potassium; as external potassium is raised, the voltage range of the channel opening shifts to more positive voltages. The inward rectification is mainly due to the blockage of outward current by internal magnesium. This receptor plays a crucial role in regulating the heartbeat. Can be blocked by external barium. This potassium channel is controlled by G proteins. The sequence is that of G protein-activated inward rectifier potassium channel 4 (KCNJ5) from Bos taurus (Bovine).